We begin with the raw amino-acid sequence, 561 residues long: Magnesium-chelatase 60 kDa subunit (561 aa).

2 disordered regions span residues Pro-234–Asp-268 and Arg-298–Gly-324. The segment covering Glu-237 to Pro-249 has biased composition (pro residues). Over residues Glu-250–Asp-265 the composition is skewed to acidic residues. Basic residues predominate over residues Arg-314–Lys-323. The VWFA domain maps to Val-379–Leu-559.

The protein belongs to the Mg-chelatase subunits D/I family.

It carries out the reaction protoporphyrin IX + Mg(2+) + ATP + H2O = Mg-protoporphyrin IX + ADP + phosphate + 3 H(+). It participates in porphyrin-containing compound metabolism; bacteriochlorophyll biosynthesis. Involved in bacteriochlorophyll biosynthesis; introduces a magnesium ion into protoporphyrin IX to yield Mg-protoporphyrin IX. This is Magnesium-chelatase 60 kDa subunit (bchD) from Rhodobacter capsulatus (strain ATCC BAA-309 / NBRC 16581 / SB1003).